The chain runs to 481 residues: Probable myosin light chain kinase DDB_G0284661 (481 aa).

Residues 13 to 269 (YNITDIIGEG…VKQSLAHKWI (257 aa)) form the Protein kinase domain. ATP is bound by residues 19–27 (IGEGTFSTV) and lysine 43. The active-site Proton acceptor is aspartate 136. Disordered stretches follow at residues 285 to 315 (PLIT…PSLK) and 345 to 427 (SNSH…DDDE). Low complexity predominate over residues 379–421 (SNNNINNNNDNNDNNNSNSNNSNNNINNFINNNNNNNNNNSNF).

It belongs to the protein kinase superfamily. CAMK Ser/Thr protein kinase family. CaMK subfamily.

It carries out the reaction L-seryl-[myosin light chain] + ATP = O-phospho-L-seryl-[myosin light chain] + ADP + H(+). The enzyme catalyses L-threonyl-[myosin light chain] + ATP = O-phospho-L-threonyl-[myosin light chain] + ADP + H(+). With respect to regulation, does not have a calmodulin-binding domain. Its function is as follows. May phosphorylate a specific serine in the N-terminus of a myosin light chain. This chain is Probable myosin light chain kinase DDB_G0284661, found in Dictyostelium discoideum (Social amoeba).